The following is a 319-amino-acid chain: Coiled-coil domain-containing protein PF3D7_1144200 (319 aa).

Over residues 1 to 12 the composition is skewed to basic and acidic residues; sequence MSEEHSNDHIED. Disordered regions lie at residues 1 to 43 and 112 to 158; these read MSEE…SESS and KLEK…NQHN. The span at 16–26 shows a compositional bias: polar residues; that stretch reads CSQNCDETNSP. Composition is skewed to basic and acidic residues over residues 27–36 and 112–131; these read KNEKDEKDFK and KLEK…KKVT. 3 coiled-coil regions span residues 100 to 134, 166 to 242, and 281 to 310; these read DLAN…TNDS, ELNE…IKKN, and NSNC…LINI. Residues 132–150 are compositionally biased toward low complexity; that stretch reads NDSTNNKNKNNSVPFLNEN.

This chain is Coiled-coil domain-containing protein PF3D7_1144200, found in Plasmodium falciparum (isolate 3D7).